The chain runs to 712 residues: MVDSDDDGDRRRDKFARERRDEDYRRGGGGFNRYDNKRPGGRRDDYQVKRSRGDDADDSFDPVSRSGNGSDLPTESDSIYSGPLQTFKKFLTSQEDDISEEDAIKKYNEYKTEHRKHQLERFFRAHKDEEWFRLKYKPDDAKKLREAHLENVQKRLQVFNELKEQGQFNKFSLDFGDAEAIIRMLDSVVVKLENGTEDELKAVLAQKLEDESLADIKKDENGNGTEQPKEEPEVKQESGATEELEEGAIEDGTEKSSNKVNIHRTCSVFLRNIPPGLTYEELEGLCKKSPGFLRLALTDGIAERKFYRRGWATFKRDINIKEICWALNAHRLRETDLNAIINRDITRRVRTNNGIASHKQVAINDLKLAVKLTVLYDKKIGLFNAADEADADREMDIRMGVDLVAASTNPLIKEVKSLVPHDVLNDISEEEAELLGVSNGGEAPAEKIRFERDDNILKALDLLIVYLRIVHSIDFYNHGHYAQEDSMPNRCGLIHVRGQPPSGVSITTDEDGALVVPQKFVNDFISGFNSRIEKGLIEKQYVSEEELEKMGKKDGEKEVEAFIQKNTVELAKDKWLCPLSGKKFKGPEFIRKHLQSKHEDKLEEARAEADFFNNYLADAQRPVDCEPKQAPRDDHRGGGGGERGGYGRERDDDRGPGGGGRNSFGGGGYDRRPQFPPRHSLGGRGGGGRYFEDAPRRQPVSYRDLDAPDDIP.

3 disordered regions span residues 1–80, 214–256, and 620–712; these read MVDS…DSIY, ADIK…TEKS, and QRPV…DDIP. 2 stretches are compositionally biased toward basic and acidic residues: residues 8-26 and 34-54; these read GDRR…DYRR and YDNK…SRGD. Residues 65-79 are compositionally biased toward polar residues; the sequence is RSGNGSDLPTESDSI. The span at 214–236 shows a compositional bias: basic and acidic residues; it reads ADIKKDENGNGTEQPKEEPEVKQ. The segment covering 240 to 251 has biased composition (acidic residues); the sequence is ATEELEEGAIED. Composition is skewed to basic and acidic residues over residues 621–637 and 645–655; these read RPVD…DHRG and GYGRERDDDRG. The span at 656-668 shows a compositional bias: gly residues; it reads PGGGGRNSFGGGG.

Belongs to the ARS2 family.

The protein localises to the nucleus. Functionally, acts as a mediator between the cap-binding complex (CBC) and the primary microRNAs (miRNAs) processing machinery. Contributes to the stability and delivery of capped primary miRNA transcripts to the primary miRNA processing complex, thereby playing a role in RNA-mediated gene silencing (RNAi) by miRNAs. This chain is Serrate RNA effector molecule homolog, found in Caenorhabditis elegans.